The primary structure comprises 103 residues: Secreted Ly-6/uPAR-related protein 1 (103 aa).

The signal sequence occupies residues 1–22 (MASRWAVQLLLVAAWSMGCGEA). The 50-residue stretch at 24–73 (KCYTCKEPMTSASCRTITRCKPEDTACMTTLVTVEAEYPFNQSPVVTRSC) folds into the UPAR/Ly6 domain. Intrachain disulfides connect Cys25/Cys50, Cys28/Cys37, Cys43/Cys73, Cys77/Cys93, and Cys94/Cys99.

Homodimer. Interacts with PLAU. Interacts with CHRNA7. As to expression, granulocytes. Expressed in skin. Predominantly expressed in the granular layer of skin, notably the acrosyringium. Identified in several biological fluids such as sweat, saliva, tears, plasma and urine.

It localises to the secreted. Its function is as follows. Has an antitumor activity. Was found to be a marker of late differentiation of the skin. Implicated in maintaining the physiological and structural integrity of the keratinocyte layers of the skin. In vitro down-regulates keratinocyte proliferation; the function may involve the proposed role as modulator of nicotinic acetylcholine receptors (nAChRs) activity. In vitro inhibits alpha-7-dependent nAChR currents in an allosteric manner. In T cells may be involved in regulation of intracellular Ca(2+) signaling. Seems to have an immunomodulatory function in the cornea. The function may implicate a possible role as a scavenger receptor for PLAU thereby blocking PLAU-dependent functions of PLAUR such as in cell migration and proliferation. The chain is Secreted Ly-6/uPAR-related protein 1 (SLURP1) from Homo sapiens (Human).